The sequence spans 456 residues: Glycine--tRNA ligase (456 aa).

Residues Arg-98 and Glu-168 each contribute to the substrate site. Residues 200–202 (RNE), 210–215 (FRTREF), 285–286 (EL), and 329–332 (GVER) each bind ATP. 215–219 (FEQME) provides a ligand contact to substrate. 325–329 (EPSVG) contacts substrate.

It belongs to the class-II aminoacyl-tRNA synthetase family. As to quaternary structure, homodimer.

Its subcellular location is the cytoplasm. It catalyses the reaction tRNA(Gly) + glycine + ATP = glycyl-tRNA(Gly) + AMP + diphosphate. Functionally, catalyzes the attachment of glycine to tRNA(Gly). This chain is Glycine--tRNA ligase, found in Mycoplasma capricolum subsp. capricolum (strain California kid / ATCC 27343 / NCTC 10154).